Reading from the N-terminus, the 407-residue chain is D-mannose isomerase (407 aa).

Catalysis depends on proton donor/acceptor residues histidine 251 and histidine 383.

The protein belongs to the N-acylglucosamine 2-epimerase family. As to quaternary structure, homodimer.

The catalysed reaction is D-mannose = D-fructose. The enzyme catalyses D-lyxose = D-xylulose. With respect to regulation, significantly inhibited by divalent metal ions such as Cu(2+), Cd(2+) or Ca(2+). In terms of biological role, catalyzes the reversible isomerization of D-mannose to D-fructose. Shows weaker activity on D-lyxose, but cannot use N-acetyl D-glucosamine. The sequence is that of D-mannose isomerase from Thermobifida fusca (Thermomonospora fusca).